The primary structure comprises 200 residues: Outer-membrane lipoprotein LolB (200 aa).

The first 18 residues, 1-18, serve as a signal peptide directing secretion; sequence MRRGRLLIAGLAALVLSA. Cys19 carries the N-palmitoyl cysteine lipid modification. A lipid anchor (S-diacylglycerol cysteine) is attached at Cys19.

This sequence belongs to the LolB family. In terms of assembly, monomer.

Its subcellular location is the cell outer membrane. Its function is as follows. Plays a critical role in the incorporation of lipoproteins in the outer membrane after they are released by the LolA protein. This Alkalilimnicola ehrlichii (strain ATCC BAA-1101 / DSM 17681 / MLHE-1) protein is Outer-membrane lipoprotein LolB.